The sequence spans 38 residues: Photosystem II reaction center protein L (38 aa).

Residues 17–37 (SLFLGRLLIFVLGILFSSYIF) traverse the membrane as a helical segment.

The protein belongs to the PsbL family. PSII is composed of 1 copy each of membrane proteins PsbA, PsbB, PsbC, PsbD, PsbE, PsbF, PsbH, PsbI, PsbJ, PsbK, PsbL, PsbM, PsbT, PsbX, PsbY, PsbZ, Psb30/Ycf12, peripheral proteins PsbO, CyanoQ (PsbQ), PsbU, PsbV and a large number of cofactors. It forms dimeric complexes.

The protein resides in the cellular thylakoid membrane. In terms of biological role, one of the components of the core complex of photosystem II (PSII). PSII is a light-driven water:plastoquinone oxidoreductase that uses light energy to abstract electrons from H(2)O, generating O(2) and a proton gradient subsequently used for ATP formation. It consists of a core antenna complex that captures photons, and an electron transfer chain that converts photonic excitation into a charge separation. This subunit is found at the monomer-monomer interface and is required for correct PSII assembly and/or dimerization. The chain is Photosystem II reaction center protein L from Prochlorothrix hollandica.